The sequence spans 135 residues: Histone H2A.4 (135 aa).

It belongs to the histone H2A family. As to quaternary structure, the nucleosome is a histone octamer containing two molecules each of H2A, H2B, H3 and H4 assembled in one H3-H4 heterotetramer and two H2A-H2B heterodimers. The octamer wraps approximately 147 bp of DNA. Expressed preferentially in meristematic tissues of young seedlings, in stigma and ovary but not in pollen.

It is found in the nucleus. The protein localises to the chromosome. Core component of nucleosome. Nucleosomes wrap and compact DNA into chromatin, limiting DNA accessibility to the cellular machineries which require DNA as a template. Histones thereby play a central role in transcription regulation, DNA repair, DNA replication and chromosomal stability. DNA accessibility is regulated via a complex set of post-translational modifications of histones, also called histone code, and nucleosome remodeling. The polypeptide is Histone H2A.4 (TH254) (Triticum aestivum (Wheat)).